Consider the following 236-residue polypeptide: UPF0502 protein Bcep1808_3727 (236 aa).

Belongs to the UPF0502 family.

This is UPF0502 protein Bcep1808_3727 from Burkholderia vietnamiensis (strain G4 / LMG 22486) (Burkholderia cepacia (strain R1808)).